The chain runs to 204 residues: MPKPSSSSSSDSPSLTTAKPAGSEVAKKVLPAKATQTVDVSASTSSLSGSKSTTRRSAATGRTSASRATAATPASRGGKSAAGSSGSGSASGGAIKPPASSSVPSFVQGIALGMIETRGMVPAIEAADAMTKAAEVNLISREYVGGGYVTVMVRGETGAVNAAVRAGADACERVGDGLVAAHIIARPHQEVEPALRPTHAKRRS.

Composition is skewed to low complexity over residues 1 to 14, 41 to 84, and 92 to 102; these read MPKP…DSPS, SAST…AAGS, and GGAIKPPASSS. A disordered region spans residues 1-102; it reads MPKPSSSSSS…GAIKPPASSS (102 aa). The 86-residue stretch at 111-196 folds into the BMC domain; it reads ALGMIETRGM…PHQEVEPALR (86 aa).

This sequence belongs to the bacterial microcompartments protein family. Homohexamer.

Its subcellular location is the carboxysome. Functionally, a probable carboxysomal shell protein found only in Prochlorococcus and Synechococcus strains that grow in low light. This chain is Probable carboxysome shell protein CsoS1E, found in Prochlorococcus marinus (strain MIT 9313).